Consider the following 459-residue polypeptide: Argininosuccinate lyase (459 aa).

The protein belongs to the lyase 1 family. Argininosuccinate lyase subfamily.

It localises to the cytoplasm. The catalysed reaction is 2-(N(omega)-L-arginino)succinate = fumarate + L-arginine. It functions in the pathway amino-acid biosynthesis; L-arginine biosynthesis; L-arginine from L-ornithine and carbamoyl phosphate: step 3/3. This chain is Argininosuccinate lyase, found in Oceanobacillus iheyensis (strain DSM 14371 / CIP 107618 / JCM 11309 / KCTC 3954 / HTE831).